We begin with the raw amino-acid sequence, 309 residues long: Putative proline iminopeptidase (309 aa).

The region spanning 33–291 (LYVHGGPGSG…LYVTNNAGHS (259 aa)) is the AB hydrolase-1 domain. Residue S105 is the Nucleophile of the active site. The active site involves D262. H290 functions as the Proton donor in the catalytic mechanism.

The protein belongs to the peptidase S33 family.

It is found in the cytoplasm. The catalysed reaction is Release of N-terminal proline from a peptide.. In terms of biological role, specifically catalyzes the removal of N-terminal proline residues from peptides. In Mycoplasma pneumoniae (strain ATCC 29342 / M129 / Subtype 1) (Mycoplasmoides pneumoniae), this protein is Putative proline iminopeptidase (pip).